The sequence spans 290 residues: 4-diphosphocytidyl-2-C-methyl-D-erythritol kinase (290 aa).

The active site involves K20. Residue 104 to 114 (PMGGGLGGGSS) coordinates ATP. D146 is a catalytic residue.

It belongs to the GHMP kinase family. IspE subfamily.

It carries out the reaction 4-CDP-2-C-methyl-D-erythritol + ATP = 4-CDP-2-C-methyl-D-erythritol 2-phosphate + ADP + H(+). The protein operates within isoprenoid biosynthesis; isopentenyl diphosphate biosynthesis via DXP pathway; isopentenyl diphosphate from 1-deoxy-D-xylulose 5-phosphate: step 3/6. Catalyzes the phosphorylation of the position 2 hydroxy group of 4-diphosphocytidyl-2C-methyl-D-erythritol. In Shewanella frigidimarina (strain NCIMB 400), this protein is 4-diphosphocytidyl-2-C-methyl-D-erythritol kinase.